The chain runs to 67 residues: Small ribosomal subunit protein eS17 (67 aa).

This sequence belongs to the eukaryotic ribosomal protein eS17 family.

In Thermococcus sibiricus (strain DSM 12597 / MM 739), this protein is Small ribosomal subunit protein eS17.